The following is a 229-amino-acid chain: 2-C-methyl-D-erythritol 4-phosphate cytidylyltransferase (229 aa).

Belongs to the IspD/TarI cytidylyltransferase family. IspD subfamily. As to quaternary structure, homodimer.

It carries out the reaction 2-C-methyl-D-erythritol 4-phosphate + CTP + H(+) = 4-CDP-2-C-methyl-D-erythritol + diphosphate. Its pathway is isoprenoid biosynthesis; isopentenyl diphosphate biosynthesis via DXP pathway; isopentenyl diphosphate from 1-deoxy-D-xylulose 5-phosphate: step 2/6. In terms of biological role, catalyzes the formation of 4-diphosphocytidyl-2-C-methyl-D-erythritol from CTP and 2-C-methyl-D-erythritol 4-phosphate (MEP). The sequence is that of 2-C-methyl-D-erythritol 4-phosphate cytidylyltransferase from Wigglesworthia glossinidia brevipalpis.